The following is a 344-amino-acid chain: Exopolyphosphatase 1 (344 aa).

Residues 319–344 (VHTSVRAVGGQPADRNAANRSRGSKP) are disordered.

Belongs to the GppA/Ppx family. Homodimer.

The enzyme catalyses [phosphate](n) + H2O = [phosphate](n-1) + phosphate + H(+). Degradation of inorganic polyphosphates (polyP). Releases orthophosphate processively from the ends of the polyP chain. This is Exopolyphosphatase 1 from Mycobacterium bovis (strain ATCC BAA-935 / AF2122/97).